A 302-amino-acid polypeptide reads, in one-letter code: uncharacterized protein (302 aa).

A signal peptide spans 1–28 (MNKLTAQNLLKKSRFLKYSLLTSISVGA).

This is an uncharacterized protein from Rickettsia prowazekii (strain Madrid E).